The chain runs to 335 residues: Arylacetonitrilase (335 aa).

Residues 6 to 291 (LKVAITQAQP…EGIVYADLDM (286 aa)) form the CN hydrolase domain. The Proton acceptor role is filled by Glu46. Lys127 is an active-site residue. The active-site Nucleophile is the Cys168.

The protein belongs to the carbon-nitrogen hydrolase superfamily. Nitrilase family.

It carries out the reaction a nitrile + 2 H2O = a carboxylate + NH4(+). It catalyses the reaction 4-chlorophenylacetonitrile + 2 H2O = 4-chlorophenylacetate + NH4(+). In terms of biological role, nitrilase that hydrolyzes preferentially phenylacetonitrile, (R,S)-mandelonitrile, and 3-indolylacetonitrile. The polypeptide is Arylacetonitrilase (Arthroderma benhamiae (strain ATCC MYA-4681 / CBS 112371) (Trichophyton mentagrophytes)).